Reading from the N-terminus, the 262-residue chain is Thiamine thiazole synthase (262 aa).

Residues A36, 55-56, G63, V127, and 154-156 each bind NAD(+); these read EK and HVD. 2 residues coordinate Fe cation: D156 and H171. M224 provides a ligand contact to NAD(+). R234 is a binding site for glycine.

It belongs to the THI4 family. Homooctamer; tetramer of dimers. Requires Fe(2+) as cofactor.

The catalysed reaction is hydrogen sulfide + glycine + NAD(+) = ADP-5-ethyl-4-methylthiazole-2-carboxylate + nicotinamide + 3 H2O + H(+). It participates in cofactor biosynthesis; thiamine diphosphate biosynthesis. Involved in the biosynthesis of the thiazole moiety of thiamine. Catalyzes the conversion of NAD and glycine to adenosine diphosphate 5-(2-hydroxyethyl)-4-methylthiazole-2-carboxylate (ADT), an adenylated thiazole intermediate, using free sulfide as a source of sulfur. This is Thiamine thiazole synthase from Methanothrix thermoacetophila (strain DSM 6194 / JCM 14653 / NBRC 101360 / PT) (Methanosaeta thermophila).